The primary structure comprises 262 residues: Putative hydro-lyase Cbei_2760 (262 aa).

This sequence belongs to the D-glutamate cyclase family.

This Clostridium beijerinckii (strain ATCC 51743 / NCIMB 8052) (Clostridium acetobutylicum) protein is Putative hydro-lyase Cbei_2760.